Reading from the N-terminus, the 87-residue chain is Cytochrome c6 (87 aa).

4 residues coordinate heme c: Cys14, Cys17, His18, and Met58.

Belongs to the cytochrome c family. PetJ subfamily. Monomer. In terms of processing, binds 1 heme c group covalently per subunit.

Its subcellular location is the cellular thylakoid lumen. Functions as an electron carrier between membrane-bound cytochrome b6-f and photosystem I in oxygenic photosynthesis. This chain is Cytochrome c6 (petJ), found in Parathermosynechococcus lividus (Thermostichus lividus).